Consider the following 495-residue polypeptide: ATP synthase subunit beta, chloroplastic (495 aa).

172–179 lines the ATP pocket; it reads GGAGVGKT.

The protein belongs to the ATPase alpha/beta chains family. F-type ATPases have 2 components, CF(1) - the catalytic core - and CF(0) - the membrane proton channel. CF(1) has five subunits: alpha(3), beta(3), gamma(1), delta(1), epsilon(1). CF(0) has four main subunits: a(1), b(1), b'(1) and c(9-12).

The protein localises to the plastid. It is found in the chloroplast thylakoid membrane. The catalysed reaction is ATP + H2O + 4 H(+)(in) = ADP + phosphate + 5 H(+)(out). In terms of biological role, produces ATP from ADP in the presence of a proton gradient across the membrane. The catalytic sites are hosted primarily by the beta subunits. The polypeptide is ATP synthase subunit beta, chloroplastic (Convallaria majalis (Lily of the valley)).